The sequence spans 178 residues: Large ribosomal subunit protein uL5 (178 aa).

A2 bears the N-acetylalanine mark. K38 is covalently cross-linked (Glycyl lysine isopeptide (Lys-Gly) (interchain with G-Cter in SUMO2)). Residues T44 and T47 each carry the phosphothreonine modification. K52 carries the N6-acetyllysine; alternate modification. K52 is covalently cross-linked (Glycyl lysine isopeptide (Lys-Gly) (interchain with G-Cter in SUMO2); alternate). At K85 the chain carries N6-acetyllysine. Residue K154 forms a Glycyl lysine isopeptide (Lys-Gly) (interchain with G-Cter in SUMO2) linkage.

It belongs to the universal ribosomal protein uL5 family. As to quaternary structure, component of the large ribosomal subunit (LSU). Part of the 5S RNP complex, which is a LSU subcomplex composed of the 5S RNA, RPL5 and RPL11. Component of a hexameric 5S RNP precursor complex, composed of 5S RNA, RRS1, RPF2/BXDC1, RPL5, RPL11 and HEATR3; this complex acts as a precursor for ribosome assembly. Interacts with PML. Interacts with MDM2 (via its RanBP2-type zinc finger domain); negatively regulates MDM2-mediated TP53 ubiquitination and degradation. Interacts with NOP53; retains RPL11 into the nucleolus.

It is found in the nucleus. The protein resides in the nucleolus. Its subcellular location is the cytoplasm. Component of the ribosome, a large ribonucleoprotein complex responsible for the synthesis of proteins in the cell. The small ribosomal subunit (SSU) binds messenger RNAs (mRNAs) and translates the encoded message by selecting cognate aminoacyl-transfer RNA (tRNA) molecules. The large subunit (LSU) contains the ribosomal catalytic site termed the peptidyl transferase center (PTC), which catalyzes the formation of peptide bonds, thereby polymerizing the amino acids delivered by tRNAs into a polypeptide chain. The nascent polypeptides leave the ribosome through a tunnel in the LSU and interact with protein factors that function in enzymatic processing, targeting, and the membrane insertion of nascent chains at the exit of the ribosomal tunnel. As part of the 5S RNP/5S ribonucleoprotein particle it is an essential component of the LSU, required for its formation and the maturation of rRNAs. It also couples ribosome biogenesis to p53/TP53 activation. As part of the 5S RNP it accumulates in the nucleoplasm and inhibits MDM2, when ribosome biogenesis is perturbed, mediating the stabilization and the activation of TP53. Promotes nucleolar location of PML. This is Large ribosomal subunit protein uL5 (RPL11) from Pongo abelii (Sumatran orangutan).